The following is a 289-amino-acid chain: NFU1 iron-sulfur cluster scaffold homolog, mitochondrial (289 aa).

The N-terminal 56 residues, 1-56, are a transit peptide targeting the mitochondrion; the sequence is MAKLISYAKGGFLRNTRLTSRAVPQVYQHATSSRGFVHLTSSVAQSSAIHVSTPST. The interval 183 to 251 is nifU; the sequence is IKELLDTRIR…IPEVESVEQV (69 aa). Residues Cys-220 and Cys-223 each coordinate [4Fe-4S] cluster. Residues 267-289 are disordered; sequence ERNLKQKDTSSTAPVGIGGGPAN.

It belongs to the NifU family.

The protein resides in the mitochondrion. Molecular scaffold for [Fe-S] cluster assembly of mitochondrial iron-sulfur proteins. This chain is NFU1 iron-sulfur cluster scaffold homolog, mitochondrial, found in Drosophila willistoni (Fruit fly).